The chain runs to 92 residues: Large ribosomal subunit protein uL24 (92 aa).

Belongs to the universal ribosomal protein uL24 family. As to quaternary structure, part of the 50S ribosomal subunit.

Functionally, one of two assembly initiator proteins, it binds directly to the 5'-end of the 23S rRNA, where it nucleates assembly of the 50S subunit. Its function is as follows. One of the proteins that surrounds the polypeptide exit tunnel on the outside of the subunit. This Opitutus terrae (strain DSM 11246 / JCM 15787 / PB90-1) protein is Large ribosomal subunit protein uL24.